We begin with the raw amino-acid sequence, 517 residues long: zeta-carotene-forming phytoene desaturase (517 aa).

11–44 contributes to the FAD binding site; the sequence is VVVGAGVGGLAAAARLAHQGFDVQVFEKTQGPGG.

The protein belongs to the carotenoid/retinoid oxidoreductase family. The cofactor is FAD.

It catalyses the reaction 15-cis-phytoene + 2 A = all-trans-zeta-carotene + 2 AH2. The protein operates within carotenoid biosynthesis; lycopene biosynthesis. Dehydrogenates carotenes in the cis conformation: has cis-to-trans isomerase activity and mediates dehydrogenation of cis-phytoene, producing zeta-carotene via the intermediary of phytofluene by the symmetrical introduction of 2 double bonds at the C-11 and C-11' positions of phytoene. This Myxococcus xanthus protein is zeta-carotene-forming phytoene desaturase (carA2).